The sequence spans 67 residues: Large ribosomal subunit protein uL30 (67 aa).

It belongs to the universal ribosomal protein uL30 family. Part of the 50S ribosomal subunit.

This chain is Large ribosomal subunit protein uL30, found in Sinorhizobium medicae (strain WSM419) (Ensifer medicae).